A 381-amino-acid chain; its full sequence is Creatine kinase M-type (381 aa).

The region spanning Lys11–Gly98 is the Phosphagen kinase N-terminal domain. One can recognise a Phosphagen kinase C-terminal domain in the interval Tyr125–Leu367. Ser128 to Arg132 is an ATP binding site. The residue at position 164 (Ser164) is a Phosphoserine. The residue at position 166 (Thr166) is a Phosphothreonine. Ser178 carries the post-translational modification Phosphoserine. Thr180 bears the Phosphothreonine mark. An ATP-binding site is contributed by His191. Position 199 is a phosphoserine (Ser199). ATP contacts are provided by Arg236 and Arg292. Residues Thr313 and Thr322 each carry the phosphothreonine modification. ATP contacts are provided by residues Arg320–Val325 and Asp335. At Ser372 the chain carries Phosphoserine.

This sequence belongs to the ATP:guanido phosphotransferase family. Dimer of identical or non-identical chains, which can be either B (brain type) or M (muscle type). With MM being the major form in skeletal muscle and myocardium, MB existing in myocardium, and BB existing in many tissues, especially brain.

It carries out the reaction creatine + ATP = N-phosphocreatine + ADP + H(+). Its function is as follows. Reversibly catalyzes the transfer of phosphate between ATP and various phosphogens (e.g. creatine phosphate). Creatine kinase isoenzymes play a central role in energy transduction in tissues with large, fluctuating energy demands, such as skeletal muscle, heart, brain and spermatozoa. The chain is Creatine kinase M-type (CKM) from Sus scrofa (Pig).